Consider the following 59-residue polypeptide: Potassium channel toxin alpha-KTx 3.10 (59 aa).

Positions 1–22 are cleaved as a signal peptide; sequence MKVFFAVLIALFVCSMVIGIHG. Intrachain disulfides connect C30-C50, C36-C55, and C40-C57.

This sequence belongs to the short scorpion toxin superfamily. Potassium channel inhibitor family. Alpha-KTx 03 subfamily. As to expression, expressed by the venom gland.

It is found in the secreted. Functionally, inhibits insect potassium channel. Is at least a 100-fold more potent against the Drosophila Shaker channel than towards its mammalian homologs Kv1.1/KCNA1 and Kv1.3/KCNA3. This chain is Potassium channel toxin alpha-KTx 3.10, found in Buthus israelis (Israeli scorpion).